The primary structure comprises 233 residues: Pirin-like protein YhaK (233 aa).

Belongs to the pirin family. In terms of assembly, monomer.

Its subcellular location is the cytoplasm. In terms of biological role, does not have quercetin 2,3-dioxygenase activity. This Escherichia coli (strain K12) protein is Pirin-like protein YhaK (yhaK).